Here is a 201-residue protein sequence, read N- to C-terminus: Adenylyl-sulfate kinase (201 aa).

Residue 35-42 participates in ATP binding; sequence GLSGSGKS. S109 (phosphoserine intermediate) is an active-site residue.

Belongs to the APS kinase family.

The enzyme catalyses adenosine 5'-phosphosulfate + ATP = 3'-phosphoadenylyl sulfate + ADP + H(+). It participates in sulfur metabolism; hydrogen sulfide biosynthesis; sulfite from sulfate: step 2/3. Functionally, catalyzes the synthesis of activated sulfate. This chain is Adenylyl-sulfate kinase, found in Enterobacter sp. (strain 638).